We begin with the raw amino-acid sequence, 253 residues long: HTH-type transcriptional repressor DasR (253 aa).

Residues 16–86 form the HTH gntR-type domain; it reads RAQRVPKYYR…QGKGTFVAKP (71 aa). The segment at residues 46–65 is a DNA-binding region (H-T-H motif); it reads ERTLAAEFDTSRTTVPQALQ.

The protein localises to the cytoplasm. Its function is as follows. Global regulator that is part of the nutrient-sensing system. In the absence of glucosamine 6-P (GlcN6P), represses the phosphotransferase system (PTS) specific for the uptake of N-acetylglucosamine (PTSNag), and genes involved in the metabolism of chitin, as well as several genes involved in development, thereby linking carbon availability to morphogenesis. Regulates the dasABC transport operon involved in glucose-related morphogenesis. Essential for development. This chain is HTH-type transcriptional repressor DasR (dasR), found in Streptomyces griseus.